Reading from the N-terminus, the 164-residue chain is 6,7-dimethyl-8-ribityllumazine synthase (164 aa).

5-amino-6-(D-ribitylamino)uracil is bound by residues phenylalanine 24, 58 to 60 (ALE), and 82 to 84 (AVI). 87–88 (ET) is a (2S)-2-hydroxy-3-oxobutyl phosphate binding site. Histidine 90 acts as the Proton donor in catalysis. Asparagine 115 provides a ligand contact to 5-amino-6-(D-ribitylamino)uracil. Arginine 129 lines the (2S)-2-hydroxy-3-oxobutyl phosphate pocket.

It belongs to the DMRL synthase family.

The enzyme catalyses (2S)-2-hydroxy-3-oxobutyl phosphate + 5-amino-6-(D-ribitylamino)uracil = 6,7-dimethyl-8-(1-D-ribityl)lumazine + phosphate + 2 H2O + H(+). It functions in the pathway cofactor biosynthesis; riboflavin biosynthesis; riboflavin from 2-hydroxy-3-oxobutyl phosphate and 5-amino-6-(D-ribitylamino)uracil: step 1/2. Functionally, catalyzes the formation of 6,7-dimethyl-8-ribityllumazine by condensation of 5-amino-6-(D-ribitylamino)uracil with 3,4-dihydroxy-2-butanone 4-phosphate. This is the penultimate step in the biosynthesis of riboflavin. The chain is 6,7-dimethyl-8-ribityllumazine synthase from Ralstonia nicotianae (strain ATCC BAA-1114 / GMI1000) (Ralstonia solanacearum).